A 218-amino-acid polypeptide reads, in one-letter code: Testis expressed protein 56 (218 aa).

The polypeptide is Testis expressed protein 56 (Tex56) (Rattus norvegicus (Rat)).